The chain runs to 430 residues: Anaerobic glycerol-3-phosphate dehydrogenase subunit B (430 aa).

It belongs to the anaerobic G-3-P dehydrogenase subunit B family. In terms of assembly, composed of a catalytic GlpA/B dimer and of membrane bound GlpC. Requires FMN as cofactor.

It catalyses the reaction a quinone + sn-glycerol 3-phosphate = dihydroxyacetone phosphate + a quinol. It functions in the pathway polyol metabolism; glycerol degradation via glycerol kinase pathway; glycerone phosphate from sn-glycerol 3-phosphate (anaerobic route): step 1/1. Its function is as follows. Conversion of glycerol 3-phosphate to dihydroxyacetone. Uses fumarate or nitrate as electron acceptor. The protein is Anaerobic glycerol-3-phosphate dehydrogenase subunit B of Actinobacillus succinogenes (strain ATCC 55618 / DSM 22257 / CCUG 43843 / 130Z).